Consider the following 211-residue polypeptide: ATP phosphoribosyltransferase (211 aa).

This sequence belongs to the ATP phosphoribosyltransferase family. Short subfamily. As to quaternary structure, heteromultimer composed of HisG and HisZ subunits.

Its subcellular location is the cytoplasm. It catalyses the reaction 1-(5-phospho-beta-D-ribosyl)-ATP + diphosphate = 5-phospho-alpha-D-ribose 1-diphosphate + ATP. It functions in the pathway amino-acid biosynthesis; L-histidine biosynthesis; L-histidine from 5-phospho-alpha-D-ribose 1-diphosphate: step 1/9. In terms of biological role, catalyzes the condensation of ATP and 5-phosphoribose 1-diphosphate to form N'-(5'-phosphoribosyl)-ATP (PR-ATP). Has a crucial role in the pathway because the rate of histidine biosynthesis seems to be controlled primarily by regulation of HisG enzymatic activity. The polypeptide is ATP phosphoribosyltransferase (Lacticaseibacillus casei (strain BL23) (Lactobacillus casei)).